The chain runs to 433 residues: Protein translocase subunit SecY (433 aa).

10 consecutive transmembrane segments (helical) span residues 17–37 (IIFT…PIAG), 71–91 (IFAL…LMSV), 117–137 (LTVL…ESIV), 141–161 (GPVV…TLVV), 184–204 (LIIF…MFEL), 212–232 (PLVA…IIFF), 268–288 (GVIP…LANF), 309–329 (IYIL…TAIV), 366–386 (LTVV…LLMN), and 388–408 (YVIS…VVLD).

The protein belongs to the SecY/SEC61-alpha family. In terms of assembly, component of the Sec protein translocase complex. Heterotrimer consisting of SecY, SecE and SecG subunits. The heterotrimers can form oligomers, although 1 heterotrimer is thought to be able to translocate proteins. Interacts with the ribosome. Interacts with SecDF, and other proteins may be involved. Interacts with SecA.

It localises to the cell inner membrane. Functionally, the central subunit of the protein translocation channel SecYEG. Consists of two halves formed by TMs 1-5 and 6-10. These two domains form a lateral gate at the front which open onto the bilayer between TMs 2 and 7, and are clamped together by SecE at the back. The channel is closed by both a pore ring composed of hydrophobic SecY resides and a short helix (helix 2A) on the extracellular side of the membrane which forms a plug. The plug probably moves laterally to allow the channel to open. The ring and the pore may move independently. The sequence is that of Protein translocase subunit SecY from Rickettsia bellii (strain RML369-C).